The following is a 269-amino-acid chain: MLTLNEHLLNQVLLIAYQSGKHLQQFYQKQVHVELKEDNTPVTEADLFVSQFLTEKLTALFPNVPVLSEENCHISFEERKNWKEYWLIDPLDGTQQFINRTDQFSVLITLVRKNKPVLSVIHAPILSTTYYAMCDFGTFKKQLDQVKKLTKNTTNFDRPLRIAVGATTSQEKVRSILPKDFPCEFVVVGSSSLKSGLVAEGAVDCYVRLGQTGEWDTAGAEVLLGETHGAIFDSHFEPLTYNQRETLINPHFVMVGDQSFDWRSIFQFN.

Mg(2+) contacts are provided by Glu69, Asp89, Leu91, Asp92, and Asp216. Glu69 lines the substrate pocket. Substrate is bound by residues 91–94 (LDGT) and Asp216.

The protein belongs to the inositol monophosphatase superfamily. CysQ family. The cofactor is Mg(2+).

It is found in the cell inner membrane. It carries out the reaction adenosine 3',5'-bisphosphate + H2O = AMP + phosphate. Its function is as follows. Converts adenosine-3',5'-bisphosphate (PAP) to AMP. The chain is 3'(2'),5'-bisphosphate nucleotidase CysQ from Haemophilus influenzae (strain ATCC 51907 / DSM 11121 / KW20 / Rd).